We begin with the raw amino-acid sequence, 695 residues long: Polyribonucleotide nucleotidyltransferase (695 aa).

Residues Asp488 and Asp494 each contribute to the Mg(2+) site. One can recognise a KH domain in the interval 554–613 (PKTAVIKIQTDKIRDLIGKGGETIKGIISTSSASVDVDDNGNVNIFSNDQKSFDTAMQMV). Residues 623–690 (GKVYTGKVVK…DRGRIKLSRK (68 aa)) form the S1 motif domain.

It belongs to the polyribonucleotide nucleotidyltransferase family. In terms of assembly, component of the RNA degradosome, which is a multiprotein complex involved in RNA processing and mRNA degradation. Mg(2+) serves as cofactor.

Its subcellular location is the cytoplasm. It catalyses the reaction RNA(n+1) + phosphate = RNA(n) + a ribonucleoside 5'-diphosphate. Functionally, involved in mRNA degradation. Catalyzes the phosphorolysis of single-stranded polyribonucleotides processively in the 3'- to 5'-direction. The chain is Polyribonucleotide nucleotidyltransferase from Ruthia magnifica subsp. Calyptogena magnifica.